The following is a 452-amino-acid chain: Pup--protein ligase (452 aa).

E9 serves as a coordination point for Mg(2+). R53 lines the ATP pocket. Residue Y55 participates in Mg(2+) binding. D57 serves as the catalytic Proton acceptor. E63 lines the Mg(2+) pocket. ATP contacts are provided by T66 and W419.

This sequence belongs to the Pup ligase/Pup deamidase family. Pup-conjugating enzyme subfamily.

The catalysed reaction is ATP + [prokaryotic ubiquitin-like protein]-L-glutamate + [protein]-L-lysine = ADP + phosphate + N(6)-([prokaryotic ubiquitin-like protein]-gamma-L-glutamyl)-[protein]-L-lysine.. It participates in protein degradation; proteasomal Pup-dependent pathway. Its pathway is protein modification; protein pupylation. Functionally, catalyzes the covalent attachment of the prokaryotic ubiquitin-like protein modifier Pup to the proteasomal substrate proteins, thereby targeting them for proteasomal degradation. This tagging system is termed pupylation. The ligation reaction involves the side-chain carboxylate of the C-terminal glutamate of Pup and the side-chain amino group of a substrate lysine. This chain is Pup--protein ligase, found in Mycolicibacterium vanbaalenii (strain DSM 7251 / JCM 13017 / BCRC 16820 / KCTC 9966 / NRRL B-24157 / PYR-1) (Mycobacterium vanbaalenii).